The primary structure comprises 1807 residues: Phospholipase D (1807 aa).

Residues Met-1–Pro-28 are disordered. The next 3 helical transmembrane spans lie at Ile-257–Ser-277, Ala-305–Tyr-325, and Val-587–Ala-607. The disordered stretch occupies residues Thr-697–Ser-734. PLD phosphodiesterase domains are found at residues Gly-853 to Arg-880 and Glu-1249 to Ser-1276. Active-site residues include His-858, Lys-860, Asp-865, His-1254, Lys-1256, and Asp-1261. Polar residues-rich tracts occupy residues Phe-1531 to Asp-1547, Tyr-1568 to Ser-1578, and Tyr-1597 to Ala-1614. The interval Phe-1531–Ser-1621 is disordered.

This sequence belongs to the phospholipase D family. TM-PLD subfamily.

The protein localises to the membrane. It carries out the reaction a 1,2-diacyl-sn-glycero-3-phosphocholine + H2O = a 1,2-diacyl-sn-glycero-3-phosphate + choline + H(+). In terms of biological role, hydrolyzes glycerol-phospholipids at the terminal phosphodiesteric bond. In Phytophthora infestans (Potato late blight agent), this protein is Phospholipase D.